A 258-amino-acid chain; its full sequence is Regulatory protein RecX (258 aa).

Belongs to the RecX family.

It is found in the cytoplasm. Modulates RecA activity. The sequence is that of Regulatory protein RecX from Streptococcus pyogenes serotype M12 (strain MGAS2096).